We begin with the raw amino-acid sequence, 469 residues long: Phosphatidylinositol 4-kinase type 2-beta (469 aa).

The segment at 1–84 (MAEACEPTRP…LDRTRTTSSE (84 aa)) is disordered. Serine 37 bears the Phosphoserine mark. The region spanning 108-439 (GVFPERISQG…AQMPCVIVEC (332 aa)) is the PI3K/PI4K catalytic domain. Residues 114 to 120 (ISQGSSG) form a G-loop region. 2 residues coordinate ATP: serine 121 and lysine 136. The tract at residues 141-143 (EPY) is important for substrate binding. The segment at 149–162 (KWTKYVHKVCCPCC) is important for interaction with membranes. ATP-binding positions include 245–248 (QLFV) and 259–260 (RR). Residues 252–260 (KEAEYWLRR) form an important for interaction with membranes region. The catalytic loop stretch occupies residues 289–297 (RNTDRGNDN). An activation loop region spans residues 330 to 350 (AIDNGLAFPFKHPDEWRAYPF). Aspartate 332 serves as a coordination point for ATP. The segment at 345-354 (WRAYPFHWAW) is important for interaction with membranes.

The protein belongs to the PI3/PI4-kinase family. Type II PI4K subfamily.

The protein localises to the cytoplasm. Its subcellular location is the cytosol. It is found in the golgi apparatus membrane. It localises to the endoplasmic reticulum membrane. The protein resides in the cell membrane. The protein localises to the early endosome membrane. The catalysed reaction is a 1,2-diacyl-sn-glycero-3-phospho-(1D-myo-inositol) + ATP = a 1,2-diacyl-sn-glycero-3-phospho-(1D-myo-inositol 4-phosphate) + ADP + H(+). Functionally, together with PI4K2A and the type III PI4Ks (PIK4CA and PIK4CB) it contributes to the overall PI4-kinase activity of the cell. This contribution may be especially significant in plasma membrane, endosomal and Golgi compartments. The phosphorylation of phosphatidylinositol (PI) to PI4P is the first committed step in the generation of phosphatidylinositol 4,5-bisphosphate (PIP2), a precursor of the second messenger inositol 1,4,5-trisphosphate (InsP3). Contributes to the production of InsP3 in stimulated cells and is likely to be involved in the regulation of vesicular trafficking. This chain is Phosphatidylinositol 4-kinase type 2-beta (Pi4k2b), found in Mus musculus (Mouse).